We begin with the raw amino-acid sequence, 363 residues long: 3-ketodihydrosphingosine reductase TSC10 (363 aa).

L10 lines the NADP(+) pocket. Residues G13, S15, and G17 each contribute to the NADPH site. The GXSXG signature appears at 13-17 (GGSQG). L18 provides a ligand contact to NADP(+). NADPH is bound by residues R40, K44, D131, and L132. Residue D131 participates in NADP(+) binding. S206 functions as the Proton donor in the catalytic mechanism. NADP(+) is bound by residues Y220, K224, and S253. Y220 functions as the Proton acceptor in the catalytic mechanism. K224 functions as the Lowers pKa of active site Tyr in the catalytic mechanism. A helical transmembrane segment spans residues 324 to 344 (FVQWLIGVIANLLVVPFYMVL).

Belongs to the short-chain dehydrogenases/reductases (SDR) family.

The protein resides in the endoplasmic reticulum membrane. The catalysed reaction is sphinganine + NADP(+) = 3-oxosphinganine + NADPH + H(+). Its pathway is lipid metabolism; sphingolipid metabolism. Catalyzes the reduction of 3'-oxosphinganine (3-ketodihydrosphingosine/KDS) to sphinganine (dihydrosphingosine/DHS), the second step of de novo sphingolipid biosynthesis. In Candida glabrata (strain ATCC 2001 / BCRC 20586 / JCM 3761 / NBRC 0622 / NRRL Y-65 / CBS 138) (Yeast), this protein is 3-ketodihydrosphingosine reductase TSC10 (TSC10).